A 282-amino-acid polypeptide reads, in one-letter code: MIVTTKIQDMQTMMQQYRLEGKTIGFVPTMGYLHEGHIALLKKAREENDIVALSVFVNPLQFGPNEDFARYPRDIERDERIAKENGVDVFFCPSVEEMYPHPLSVQVTVKERVDVLCGKSRPGHFDGVATVLTKLFHIVMPTRAYFGMKDAQQVAVVDGLIRDFHFPIELVAVPTVREEDGLAKSSRNVYLSPEERKEAPALYQALQQAKTAIENGERNPETICALVKNYIQTHTHAEIDYVEVYSYPDLKPLEKLHGKVIIAVAVRFASARLIDNITLDIV.

30 to 37 contacts ATP; sequence MGYLHEGH. The active-site Proton donor is histidine 37. (R)-pantoate is bound at residue glutamine 61. A beta-alanine-binding site is contributed by glutamine 61. Residue 147 to 150 participates in ATP binding; sequence GMKD. (R)-pantoate is bound at residue glutamine 153. ATP is bound by residues valine 176 and 184 to 187; that span reads KSSR.

Belongs to the pantothenate synthetase family. In terms of assembly, homodimer.

It localises to the cytoplasm. The enzyme catalyses (R)-pantoate + beta-alanine + ATP = (R)-pantothenate + AMP + diphosphate + H(+). It participates in cofactor biosynthesis; (R)-pantothenate biosynthesis; (R)-pantothenate from (R)-pantoate and beta-alanine: step 1/1. Functionally, catalyzes the condensation of pantoate with beta-alanine in an ATP-dependent reaction via a pantoyl-adenylate intermediate. This chain is Pantothenate synthetase, found in Geobacillus sp. (strain WCH70).